We begin with the raw amino-acid sequence, 634 residues long: Endoribonuclease rege-1 (634 aa).

Disordered regions lie at residues 1 to 33 (MDSTARGHAPLCRTSNQRGLGTRLNPYYQSTPH), 90 to 113 (SHPSLSRESSDPSKIDDDQTAPMI), and 156 to 223 (KMGL…NPDP). Residues 97-106 (ESSDPSKIDD) show a composition bias toward basic and acidic residues. Composition is skewed to low complexity over residues 182–194 (SSASSSSASSSSS) and 201–217 (SVSIATSSPATSSSTPS). The RNase NYN domain occupies 225–377 (LRAVVVDGSN…PSGRHGPRIE (153 aa)). Asp314 contacts Mg(2+). Residues 387 to 412 (SSNPLVCPYARKCTYGNKCKFYHPER) form a C3H1-type zinc finger.

It belongs to the ZC3H12 family. Mg(2+) is required as a cofactor. In terms of tissue distribution, expressed in the intestinal cells adjacent to the pharynx.

It localises to the cytoplasm. In terms of biological role, endonuclease which binds to the 3'UTR of target mRNAs and induces degradation of the transcript. Acts together with rle-1 to repress the expression of the transcription factor ets-4 by binding to the conserved ADE (alternate decay element) and RCE (REGE-1 cleavage element) stem loop structure in its 3'UTR, which controls the expression of genes in the IIS and TORC1 pathways, including those involved in lipid metabolism and autophagosome formation. May play a role in the clearance of apoptotic cell corpses. This chain is Endoribonuclease rege-1, found in Caenorhabditis elegans.